Here is a 1066-residue protein sequence, read N- to C-terminus: Beta-galactosidase (1066 aa).

Substrate is bound by residues Asn-110 and Asp-209. Position 209 (Asp-209) interacts with Na(+). Positions 432, 434, and 477 each coordinate Mg(2+). Residues Glu-477 and 553–556 each bind substrate; that span reads EYAH. Residue Glu-477 is the Proton donor of the active site. Catalysis depends on Glu-553, which acts as the Nucleophile. Residue Asn-613 participates in Mg(2+) binding. Residues Phe-617 and Asn-620 each coordinate Na(+). 2 residues coordinate substrate: Asn-620 and Trp-1041.

This sequence belongs to the glycosyl hydrolase 2 family. As to quaternary structure, homotetramer. Mg(2+) serves as cofactor. It depends on Na(+) as a cofactor.

It catalyses the reaction Hydrolysis of terminal non-reducing beta-D-galactose residues in beta-D-galactosides.. The protein is Beta-galactosidase of Yersinia pseudotuberculosis serotype IB (strain PB1/+).